Here is a 145-residue protein sequence, read N- to C-terminus: uncharacterized protein (145 aa).

This sequence belongs to the methyltransferase superfamily.

Functionally, probable methyltransferase. This is an uncharacterized protein from Schizosaccharomyces pombe (strain 972 / ATCC 24843) (Fission yeast).